Reading from the N-terminus, the 193-residue chain is Transcriptional activator GvpE2 (193 aa).

143-148 contacts DNA; that stretch reads KRKVYR. The tract at residues 153 to 184 is leucine-zipper; sequence QAAIEHVDSVVLQLLTFAVGLQTIMADCIVNQ.

In terms of assembly, homodimer. Interacts with endogenous GvpD, also with GvpD from H.mediterranei.

The protein resides in the cytoplasm. Its activity is regulated as follows. Degraded once GvpD is translated; degradation requires 'Arg-494' of GvpD; tested in transgenic H.volcanii. Fusion of green fluorescent protein to its C-terminus partially protects it from degradation. Plays a regulatory role in gas vesicle synthesis, required to activate transcription of the c-gvpA operon. Gas vesicles are hollow, gas filled proteinaceous nanostructures found in several microbial planktonic microorganisms. They allow positioning of halobacteria at the optimal depth for growth in the poorly aerated, shallow brine pools of their habitat. In terms of biological role, expression of 2 c-vac DNA fragments containing 2 divergently transcribed regions (gvpE-gvpF-gvpG-gvpH-gvpI-gvpJ-gvpK-gvpL-gvpM and gvpA-gvpC-gvpN-gvpO) allows H.volcanii to produce gas vesicles. All site-directed mutagenesis is tested in H.volcanii. This Halobacterium salinarum (strain ATCC 700922 / JCM 11081 / NRC-1) (Halobacterium halobium) protein is Transcriptional activator GvpE2.